Here is a 435-residue protein sequence, read N- to C-terminus: Glycine reductase complex component B subunit gamma (435 aa).

U350 is an active-site residue. A non-standard amino acid (selenocysteine) is located at residue U350.

This sequence belongs to the GrdB/GrdF/GrdH family. Heterohexamer of two alpha, two beta and two gamma subunits. Component of the glycine reductase complex, together with components A and C. PB is substrate specific.

It carries out the reaction acetyl phosphate + [thioredoxin]-disulfide + NH4(+) + H2O = [thioredoxin]-dithiol + glycine + phosphate + H(+). Functionally, in the first step of glycine reductase, the substrate is bound to component PB via a Schiff base intermediate. Then the PB-activated substrate is nucleophilically attacked by the selenol anion of component PA to transform it to a carboxymethylated selenoether and the respective amine. By action of component PC, acetyl phosphate is formed, leaving component PA in its oxidized state. Finally component PA becomes reduced by the thioredoxin system to start a new catalytic cycle of reductive deamination. The chain is Glycine reductase complex component B subunit gamma (grdB) from Carboxydothermus hydrogenoformans (strain ATCC BAA-161 / DSM 6008 / Z-2901).